The chain runs to 171 residues: 3-hydroxydecanoyl-[acyl-carrier-protein] dehydratase (171 aa).

Residue histidine 70 is part of the active site.

This sequence belongs to the thioester dehydratase family. FabA subfamily. As to quaternary structure, homodimer.

It localises to the cytoplasm. The catalysed reaction is a (3R)-hydroxyacyl-[ACP] = a (2E)-enoyl-[ACP] + H2O. It catalyses the reaction (3R)-hydroxydecanoyl-[ACP] = (2E)-decenoyl-[ACP] + H2O. It carries out the reaction (2E)-decenoyl-[ACP] = (3Z)-decenoyl-[ACP]. Its pathway is lipid metabolism; fatty acid biosynthesis. Functionally, necessary for the introduction of cis unsaturation into fatty acids. Catalyzes the dehydration of (3R)-3-hydroxydecanoyl-ACP to E-(2)-decenoyl-ACP and then its isomerization to Z-(3)-decenoyl-ACP. Can catalyze the dehydratase reaction for beta-hydroxyacyl-ACPs with saturated chain lengths up to 16:0, being most active on intermediate chain length. This chain is 3-hydroxydecanoyl-[acyl-carrier-protein] dehydratase, found in Photobacterium profundum (strain SS9).